The sequence spans 295 residues: WHI2-like protein P4H10.16c (295 aa).

Belongs to the WHI2 family.

It localises to the cytoplasm. The protein localises to the nucleus. This is WHI2-like protein P4H10.16c from Schizosaccharomyces pombe (strain 972 / ATCC 24843) (Fission yeast).